Here is a 410-residue protein sequence, read N- to C-terminus: Trifunctional NAD biosynthesis/regulator protein NadR (410 aa).

Residues 7–62 enclose the HTH cro/C1-type domain; that stretch reads LKTAIKQQGCTLQQVADASGMTKGYLSQLLNAKIKSPSAQKLEALHRFLGLEFPRR. A DNA-binding region (H-T-H motif) is located at residues 18–37; that stretch reads LQQVADASGMTKGYLSQLLN. Residues 63–229 are nicotinamide mononucleotide adenylyltransferase; it reads QKNIGVVFGK…EYIPTEVKPF (167 aa). Residues 70 to 73, histidine 77, arginine 104, 144 to 157, 177 to 179, 204 to 206, 259 to 261, and 294 to 297 contribute to the NAD(+) site; these read FGKF, EEGMEPYPHGWDVW, TSE, MNI, SAW, and YIDF. The segment at 230–410 is ribosylnicotinamide kinase; it reads FVRTVAILGG…LVKEMMGEQG (181 aa).

The protein in the central section; belongs to the bacterial NMN adenylyltransferase family. In the C-terminal section; belongs to the bacterial RNK family. Homotetramer.

Its subcellular location is the cell membrane. It is found in the cytoplasm. It carries out the reaction beta-nicotinamide D-ribonucleotide + ATP + H(+) = diphosphate + NAD(+). The enzyme catalyses beta-nicotinamide D-riboside + ATP = beta-nicotinamide D-ribonucleotide + ADP + H(+). Its pathway is cofactor biosynthesis; NAD(+) biosynthesis [regulation]. The protein operates within cofactor biosynthesis; NAD(+) biosynthesis; NAD(+) from nicotinamide D-ribonucleotide: step 1/1. Its activity is regulated as follows. Feed-back regulated by NAD. A high level of NAD causes NadR to lose enzymatic activity and repress several NAD synthetic genes; conversely, a low NAD level activates the assimilatory enzymatic activities and leads to derepression of biosynthetic genes. Functionally, this enzyme has three activities: DNA binding, nicotinamide mononucleotide (NMN) adenylyltransferase and ribosylnicotinamide (RN) kinase. The DNA-binding domain binds to the nadB operator sequence in an NAD- and ATP-dependent manner. As NAD levels increase within the cell, the affinity of NadR for the nadB operator regions of nadA, nadB, and pncB increases, repressing the transcription of these genes. The RN kinase activity catalyzes the phosphorylation of RN to form nicotinamide ribonucleotide. The NMN adenylyltransferase activity catalyzes the transfer of the AMP moiety of ATP to nicotinamide ribonucleotide to form NAD(+). The NMN adenylyltransferase domain also functions as the NAD and ATP sensor. The chain is Trifunctional NAD biosynthesis/regulator protein NadR (nadR) from Salmonella typhimurium (strain LT2 / SGSC1412 / ATCC 700720).